The following is a 495-amino-acid chain: NADH-ubiquinone oxidoreductase chain 4 (495 aa).

14 consecutive transmembrane segments (helical) span residues 9–29, 37–57, 89–109, 118–138, 139–159, 173–193, 214–234, 245–265, 272–292, 307–327, 335–355, 367–387, 413–433, and 457–477; these read YSNL…ILVI, IRGI…FFWI, ISLF…LVGF, EYMI…CSLD, LLIF…IIGV, FFLY…FIFF, ILLW…VPVH, PTAG…YGFL, FPEA…IAII, IIAY…FSLN, ILLM…VGAL, YGGL…FTLA, LVAT…LWLY, and VLIF…PEVF.

The protein belongs to the complex I subunit 4 family.

Its subcellular location is the mitochondrion membrane. It carries out the reaction a ubiquinone + NADH + 5 H(+)(in) = a ubiquinol + NAD(+) + 4 H(+)(out). In terms of biological role, core subunit of the mitochondrial membrane respiratory chain NADH dehydrogenase (Complex I) that is believed to belong to the minimal assembly required for catalysis. Complex I functions in the transfer of electrons from NADH to the respiratory chain. The immediate electron acceptor for the enzyme is believed to be ubiquinone. This Marchantia polymorpha (Common liverwort) protein is NADH-ubiquinone oxidoreductase chain 4 (ND4).